The sequence spans 207 residues: Guanylate kinase (207 aa).

The Guanylate kinase-like domain occupies 4 to 184; sequence GILFIISAPS…AINDLRTIII (181 aa). An ATP-binding site is contributed by 11 to 18; it reads APSGTGKS.

The protein belongs to the guanylate kinase family.

The protein resides in the cytoplasm. The enzyme catalyses GMP + ATP = GDP + ADP. In terms of biological role, essential for recycling GMP and indirectly, cGMP. The protein is Guanylate kinase of Buchnera aphidicola subsp. Schizaphis graminum (strain Sg).